Here is a 389-residue protein sequence, read N- to C-terminus: S-adenosylmethionine synthase (389 aa).

H17 contacts ATP. Position 19 (D19) interacts with Mg(2+). A K(+)-binding site is contributed by E45. L-methionine is bound by residues E58 and Q101. A flexible loop region spans residues 101-111 (QSPDIAQGVTE). Residues 168–170 (DSK), 234–235 (RF), D243, 249–250 (RK), A266, and K270 each bind ATP. L-methionine is bound at residue D243. L-methionine is bound at residue K274.

Belongs to the AdoMet synthase family. In terms of assembly, homotetramer; dimer of dimers. Requires Mg(2+) as cofactor. It depends on K(+) as a cofactor.

It localises to the cytoplasm. The catalysed reaction is L-methionine + ATP + H2O = S-adenosyl-L-methionine + phosphate + diphosphate. It participates in amino-acid biosynthesis; S-adenosyl-L-methionine biosynthesis; S-adenosyl-L-methionine from L-methionine: step 1/1. In terms of biological role, catalyzes the formation of S-adenosylmethionine (AdoMet) from methionine and ATP. The overall synthetic reaction is composed of two sequential steps, AdoMet formation and the subsequent tripolyphosphate hydrolysis which occurs prior to release of AdoMet from the enzyme. This Geobacter sp. (strain M21) protein is S-adenosylmethionine synthase.